A 1369-amino-acid chain; its full sequence is MSTRWRYYNSKRGNGFRGRGRGRGRGTSLTAVALPRDDNFHKGAQDGAYFKDMPMDPEQFRDETVLSLSFAQGMLGAAYYEQSSQLLKIMNDISEDLEFRFLKRLIDDVKPTLIIANRSQDLEFIKFLTTRYDPQEKIYEDGTTEEGTSEDTVPTWDSSLAYSTDETTAEKEEKEEDEDDDDEGLPAKLNKLPNNFFRMSRAIERLKAMAGSHDSSMTEEDKYIIIKMRFDIEAVNMIRSFGALLLFLDETRMGVTDDPLSVTSPIKSIKTFTLGNLVEIDFNTIQALDILPKETENKKTFGQGRSLYQLMDKCRSTVGKKCLRKWFRNPTTDRDDLVSRQKCVHYFKQDWNAEVTAKLSSILGRVKALNSVFQKFQSGTAQLIHWECFVSTVNALVEILNIIRQTPISKEFPVESDLLREVSEIAVIAGSIINFAESKIQGRVTVMNGIDEELDEIRDTYENMPMVLTAIAKQEEARLGLPPYSNVACVYIPLVGFVLSVPRDYGVESQPDMTLLYSTHEDLRVRNATTSRLDDEFGDILMRLIDSQTAIILTLKTRVMKKKRSIIKLLSIASRIDVLISFGLIAAQNGWNCPALVDEPVIEAVELYHPISVLVVKKSFVPNQVSSGRDGIKASIITGPNACGKSVYMKSIGIMVFLSHIGSFVPARHAKIGIVDRIVTRMFTVDSVLDGMSTFAKDVEQVALALRKATGNSLVIIDEFGKGTMTEVGLSLLASVMTYWMNRGADRCPHIFLSSHFHALPNYIPLETNIATFLTFTVLREAGGKIKYLFRMTPGLVDCSFALSVAKEEGIPPPVIGRACRIYKALKAGTLLKEIKAEVSNDNEKQLVEDMDVVLADEDGFMAAVESFVKRKKTSFCESSMRNVSEEIEKERSEASTPASKSRSTITARSNSVLSSRSMASVDQLSVLDALLPKKKKKKVTGSSMESSMSPDPFQEEDEGTEGEEDQISAPVSRPTLPSVQKYASEEEKQQSINSRHSFSTRTAIHIPTPIQMGEAGGVKRPRSTSTSSPGPSASKSVRTEVFKKTPNVKESQVLETPKQLSISSFLEPKFPSSEKDVISRVSERYLQSDPFKTPISDRRSQQSSRHSTPKNRSMNQSLIQSARDTPHETIRSSNEVNPEFFNIFNFPDDSILKSQDTYDPNVTPRSSSRRELRPDVSHSQNSQFGEVFSELGTQFSIFNSQQSFPGNSMGTTNPDCSIFDDFFANSQDGEKKIDSTKTSMPIVNSDNFIFKTPEPRSSEKQRSLLKNKGQASNSSISPSSLILGQLAFGDVDQTPRPRGDNPIEFQYDVVDDDDPIFEEKNCSAPVFEFLKSNDDEEDDEFLKSFLETEGSLHIDTSADETIDRSKRS.

A disordered region spans residues 138–190 (IYEDGTTEEGTSEDTVPTWDSSLAYSTDETTAEKEEKEEDEDDDDEGLPAKLN). The segment covering 173–184 (EKEEDEDDDDEG) has biased composition (acidic residues). 639–646 (GPNACGKS) lines the ATP pocket. 4 disordered regions span residues 880–915 (SMRN…SVLS), 935–1135 (KKKK…RSSN), 1153–1182 (LKSQ…HSQN), and 1248–1278 (NFIF…SSIS). Residues 884–894 (VSEEIEKERSE) show a composition bias toward basic and acidic residues. Polar residues-rich tracts occupy residues 895–915 (ASTP…SVLS) and 941–950 (TGSSMESSMS). Residues 954-967 (FQEEDEGTEGEEDQ) show a composition bias toward acidic residues. The span at 991–1003 (QSINSRHSFSTRT) shows a compositional bias: polar residues. Residues 1024–1037 (STSTSSPGPSASKS) are compositionally biased toward low complexity. A compositionally biased stretch (polar residues) spans 1049–1065 (VKESQVLETPKQLSISS). A compositionally biased stretch (basic and acidic residues) spans 1073 to 1084 (SSEKDVISRVSE). Composition is skewed to polar residues over residues 1111 to 1124 (KNRS…QSAR) and 1153 to 1167 (LKSQ…TPRS). Basic and acidic residues predominate over residues 1254–1263 (PEPRSSEKQR).

Belongs to the DNA mismatch repair MutS family. In terms of assembly, heterooligomer of him-14 and msh-5. Interacts with the brc-1-brd-1 heterodimer. As to expression, expressed in the germline.

Its subcellular location is the chromosome. Crucial component in meiotic recombination, functioning at some point after the initiation step of recombination. Plays a role in promoting the crossover outcome of meiotic recombination events. Required for formation of normal meiotic crossover, and crossover and chiasmata generated by artificially made DNA breaks. Together with him-14 and zhp-3 plays a role in the activation of DNA damage-dependent apoptosis at the DNA damage checkpoint in pachytene cells. The sequence is that of MutS protein homolog 5 from Caenorhabditis elegans.